Consider the following 136-residue polypeptide: 1,4-dihydroxy-2-naphthoyl-CoA hydrolase (136 aa).

Catalysis depends on Glu63, which acts as the Nucleophile or proton acceptor. Substrate is bound by residues Gly82, 89–92 (HVRS), and 106–111 (HLGSRH).

Belongs to the thioesterase PaaI family. In terms of assembly, homotetramer. Dimer of dimers.

The enzyme catalyses 1,4-dihydroxy-2-naphthoyl-CoA + H2O = 1,4-dihydroxy-2-naphthoate + CoA + H(+). It functions in the pathway quinol/quinone metabolism; 1,4-dihydroxy-2-naphthoate biosynthesis; 1,4-dihydroxy-2-naphthoate from chorismate: step 7/7. Its pathway is quinol/quinone metabolism; menaquinone biosynthesis. Functionally, catalyzes the hydrolysis of 1,4-dihydroxy-2-naphthoyl-CoA (DHNA-CoA) to 1,4-dihydroxy-2-naphthoate (DHNA). Also shows significant activity toward a wide range of acyl-CoA thioesters, and minimal activity toward benzoyl-holoEntB. This chain is 1,4-dihydroxy-2-naphthoyl-CoA hydrolase, found in Escherichia coli (strain K12).